We begin with the raw amino-acid sequence, 138 residues long: Ribosome-binding factor A (138 aa).

A disordered region spans residues 112–138; sequence EARTQGQAPAADVEPAPGAAPDDEAEE. The span at 119–131 shows a compositional bias: low complexity; the sequence is APAADVEPAPGAA.

Belongs to the RbfA family. Monomer. Binds 30S ribosomal subunits, but not 50S ribosomal subunits or 70S ribosomes.

The protein localises to the cytoplasm. In terms of biological role, one of several proteins that assist in the late maturation steps of the functional core of the 30S ribosomal subunit. Associates with free 30S ribosomal subunits (but not with 30S subunits that are part of 70S ribosomes or polysomes). Required for efficient processing of 16S rRNA. May interact with the 5'-terminal helix region of 16S rRNA. The sequence is that of Ribosome-binding factor A from Anaeromyxobacter sp. (strain K).